The primary structure comprises 316 residues: MENFPIINLENLNGDERAKTMEMIKDACENWGFFELVNHGIPHEVMDTVEKLTKGHYKKCMEQRFKELVASKGLEAVQAEVTDLDWESTFFLRHLPTSNISQVPDLDEEYREVMRDFAKRLEKLAEELLDLLCENLGLEKGYLKNAFYGSKGPNFGTKVSNYPPCPKPDLIKGLRAHTDAGGIILLFQDDKVSGLQLLKDEQWIDVPPMRHSIVVNLGDQLEVITNGKYKSVMHRVIAQTDGTRMSLASFYNPGNDAVIYPAPSLIEESKQVYPKFVFDDYMKLYAGLKFQPKEPRFEAMKAMEANVELVDQIASA.

Residues Pro-153 to Pro-253 enclose the Fe2OG dioxygenase domain. Fe cation-binding residues include His-177, Asp-179, and His-234.

Belongs to the iron/ascorbate-dependent oxidoreductase family. Fe cation is required as a cofactor. As to expression, expressed in all of the floral organs examined apart from the sepals.

The catalysed reaction is 1-aminocyclopropane-1-carboxylate + L-ascorbate + O2 = ethene + L-dehydroascorbate + hydrogen cyanide + CO2 + 2 H2O. Its pathway is alkene biosynthesis; ethylene biosynthesis via S-adenosyl-L-methionine; ethylene from S-adenosyl-L-methionine: step 2/2. The polypeptide is 1-aminocyclopropane-1-carboxylate oxidase 4 (ACO4) (Solanum lycopersicum (Tomato)).